The primary structure comprises 450 residues: Probable ECA polymerase (450 aa).

11 consecutive transmembrane segments (helical) span residues 6–26 (FSGL…LTWF), 37–57 (VFFS…TSVL), 63–83 (VGVA…CFYA), 118–138 (VILM…NGFL), 155–175 (GVAL…VYFL), 181–201 (AWLF…MIVG), 207–227 (IIIA…ISLW), 228–248 (MLAA…LKRY), 341–361 (LVVM…GLII), 378–398 (YKAA…IVLA), and 410–430 (VFFI…YWLF).

Belongs to the WzyE family. In terms of assembly, probably part of a complex composed of WzxE, WzyE and WzzE.

The protein resides in the cell inner membrane. Its pathway is bacterial outer membrane biogenesis; enterobacterial common antigen biosynthesis. Its function is as follows. Probably involved in the polymerization of enterobacterial common antigen (ECA) trisaccharide repeat units. In Shigella flexneri, this protein is Probable ECA polymerase.